A 256-amino-acid chain; its full sequence is Ethylene-responsive transcription factor ERF084 (256 aa).

The segment at residues glycine 115 to valine 172 is a DNA-binding region (AP2/ERF).

The protein belongs to the AP2/ERF transcription factor family. ERF subfamily.

Its subcellular location is the nucleus. Probably acts as a transcriptional activator. Binds to the GCC-box pathogenesis-related promoter element. May be involved in the regulation of gene expression by stress factors and by components of stress signal transduction pathways. The polypeptide is Ethylene-responsive transcription factor ERF084 (ERF084) (Arabidopsis thaliana (Mouse-ear cress)).